Consider the following 241-residue polypeptide: Alkylated DNA repair protein ALKBH6 homolog (241 aa).

A Fe2OG dioxygenase domain is found at 87–232 (AINHVLINEY…RVSLTCRLVP (146 aa)). The Fe cation site is built by H105, D107, and H181. Residues R223 and R229 each contribute to the 2-oxoglutarate site.

It belongs to the alkB family. Fe(2+) is required as a cofactor.

It is found in the nucleus. Functionally, probable RNA demethylase that binds to both N6-methyladenosine-containing- (m(6)A) and C5-methylcytidine-containing- (m(5)C) RNAs, thus being a probable m(6)A and m(5)C eraser. Involved in responses to abscisic acid (ABA) via the modulation of the expression of ABA signaling-related genes (e.g. ABI3 and ABI4). Acts as a negative regulator during seed germination under abiotic stresses (e.g. salt, cold and ABA). Positive modulator of seedling growth and survival in response to drought and heat, but counteracts tolerance to salt. This Arabidopsis thaliana (Mouse-ear cress) protein is Alkylated DNA repair protein ALKBH6 homolog.